Reading from the N-terminus, the 148-residue chain is Urease accessory protein UreE (148 aa).

It belongs to the UreE family.

The protein localises to the cytoplasm. Functionally, involved in urease metallocenter assembly. Binds nickel. Probably functions as a nickel donor during metallocenter assembly. This Nostoc punctiforme (strain ATCC 29133 / PCC 73102) protein is Urease accessory protein UreE.